The primary structure comprises 262 residues: MIVVKIGGRVVKNALQNVIESVLRYPGKLILVHGGGDIVSEYTKRMGMEPTFVTSPEGIRSRYTSKEELDIYVMTMGLINKNIVTQLISKGKTAIGITGVDGGSVIGTRKKRIMILDERGKKRIIDGGYTGKIVSVNSQLISSLTSLVDVIVISPIALDTEESTPLNVDGDQMAFNVARAVKAEALLLLSDVDGVLLNNAVVKKLSKEEAKELATKIGPGMNRKVLMAAESVESGVSKVIIGSGLVPDAINSALAGRGTEIS.

Substrate contacts are provided by residues 35–36 (GG), R62, and N167.

It belongs to the acetylglutamate kinase family. LysZ subfamily.

The protein resides in the cytoplasm. The catalysed reaction is [amino-group carrier protein]-C-terminal-N-(1,4-dicarboxybutan-1-yl)-L-glutamine + ATP = [amino-group carrier protein]-C-terminal-N-(1-carboxy-5-phosphooxy-5-oxopentan-1-yl)-L-glutamine + ADP. It carries out the reaction [amino-group carrier protein]-C-terminal-gamma-(L-glutamyl)-L-glutamate + ATP = [amino-group carrier protein]-C-terminal-gamma-(5-phospho-L-glutamyl)-L-glutamate + ADP. Its pathway is amino-acid biosynthesis; L-lysine biosynthesis via AAA pathway; L-lysine from L-alpha-aminoadipate (Thermus route): step 2/5. It participates in amino-acid biosynthesis; L-arginine biosynthesis. In terms of biological role, involved in both the arginine and lysine biosynthetic pathways. Phosphorylates the LysW-bound precursors glutamate (for arginine biosynthesis), respectively alpha-aminoadipate (for lysine biosynthesis). This Metallosphaera sedula (strain ATCC 51363 / DSM 5348 / JCM 9185 / NBRC 15509 / TH2) protein is [LysW]-aminoadipate/[LysW]-glutamate kinase.